A 469-amino-acid chain; its full sequence is Calcium-binding mitochondrial carrier protein SCaMC-2 (469 aa).

The Mitochondrial intermembrane segment spans residues 1-189 (MLCLCLYVPL…ERQTGMWWRH (189 aa)). EF-hand domains follow at residues 47–80 (TYRQWKQKIVQAGDKDLDGQLDFEEFVHYLQDHE), 78–113 (DHEKKLRLVFKSLDKKNDGRIDAQEIMQSLRDLGVK), and 114–149 (ISEQQAEKILKSMDKNGTMTIDWNEWRDYHLLHPVE). Residues aspartate 60, aspartate 62, aspartate 64, glutamine 66, and glutamate 71 each coordinate Ca(2+). Solcar repeat units lie at residues 184 to 270 (GMWW…IKRL), 278 to 363 (LRIH…LKNA), and 375 to 463 (PGVF…LKIT). Residues 190-207 (LVAGGGAGAVSRTCTAPL) form a helical membrane-spanning segment. Topologically, residues 208 to 244 (DRLKVLMQVHASRSNNMCIVGGFTQMIREGGARSLWR) are mitochondrial matrix. A helical transmembrane segment spans residues 245–264 (GNGINVLKIAPESAIKFMAY). Over 265 to 287 (EQIKRLIGSDQETLRIHERLVAG) the chain is Mitochondrial intermembrane. The chain crosses the membrane as a helical span at residues 288–301 (SLAGAIAQSSIYPM). Over 302 to 337 (EVLKTRMALRKTGQYSGMLDCARKILAREGMAAFYK) the chain is Mitochondrial matrix. The chain crosses the membrane as a helical span at residues 338 to 357 (GYVPNMLGIIPYAGIDLAVY). Residues 358–380 (ETLKNAWLQRYAVNSADPGVFVL) are Mitochondrial intermembrane-facing. The chain crosses the membrane as a helical span at residues 381-398 (LACGTMSSTCGQLASYPL). Over 399–437 (ALVRTRMQAQASMEGAPEVTMSSLFKQILRTEGAFGLYR) the chain is Mitochondrial matrix. A helical membrane pass occupies residues 438–457 (GLAPNFMKVIPAVSISYVVY). At 458–469 (ENLKITLGVQSR) the chain is on the mitochondrial intermembrane side.

Belongs to the mitochondrial carrier (TC 2.A.29) family.

The protein localises to the mitochondrion inner membrane. In terms of biological role, calcium-dependent mitochondrial solute carrier. Mitochondrial solute carriers shuttle metabolites, nucleotides, and cofactors through the mitochondrial inner membrane. May act as a ATP-Mg/Pi exchanger that mediates the transport of Mg-ATP in exchange for phosphate, catalyzing the net uptake or efflux of adenine nucleotides into or from the mitochondria. This chain is Calcium-binding mitochondrial carrier protein SCaMC-2 (SLC25A25), found in Bos taurus (Bovine).